We begin with the raw amino-acid sequence, 595 residues long: Myb-like protein D (595 aa).

Disordered regions lie at residues 1 to 47 (MQQQ…NGLV), 55 to 74 (QQYQDDQNDSFDDDSMDEGE), 82 to 266 (DESQ…NNRK), and 319 to 445 (VLQK…IWTQ). Low complexity predominate over residues 19-47 (DNYNNNNSNINTNNNNSINDYENQNNGLV). Acidic residues predominate over residues 60–74 (DQNDSFDDDSMDEGE). 2 stretches are compositionally biased toward low complexity: residues 90 to 212 (NNNN…ENNN) and 225 to 264 (NNNNNNNNNNNNNNNNNNNNNNNNKNNNNNNNNNNNNNNN). Residues 324–348 (TLNRNRSRSRSRSNSRSHSRSRSRS) show a composition bias toward basic residues. Composition is skewed to low complexity over residues 349 to 368 (RSLSSISRSRSRSRLIYSRS) and 376 to 420 (NNNN…NNNN). Over residues 423 to 434 (RKSEDDNQDDGK) the composition is skewed to basic and acidic residues. Positions 435-489 (KKHRKNAIWTQEEDEKMAQLYNKYGKSWKAIHSHFDDKTREQVQSHGQYLIRIGK) constitute an HTH myb-type domain. Positions 462–485 (WKAIHSHFDDKTREQVQSHGQYLI) form a DNA-binding region, H-T-H motif. Residues 494–595 (HRDGRKERRK…NSSNYVNNDN (102 aa)) form a disordered region. Low complexity predominate over residues 517–595 (QQNQQNNNNN…NSSNYVNNDN (79 aa)).

Its subcellular location is the nucleus. The chain is Myb-like protein D (mybD) from Dictyostelium discoideum (Social amoeba).